A 215-amino-acid chain; its full sequence is Formate dehydrogenase subunit beta (215 aa).

Residues 3-32 (KGFFVDTTRCTACRGCQVACKQWHGNPATP) enclose the 4Fe-4S ferredoxin-type 1 domain. The [4Fe-4S] cluster site is built by Cys-12, Cys-15, Cys-18, Cys-22, Cys-73, Cys-76, Cys-81, Cys-121, Cys-138, Cys-141, Cys-153, and Cys-157. The 4Fe-4S ferredoxin-type 2 domain maps to 129–168 (VAESNQMAKCDMCIDRITNGLRPACVTSCPTGAMNFGDLS).

As to quaternary structure, heterodimer of alpha (FdhA) and beta (FdhB) subunits. The cofactor is [4Fe-4S] cluster.

The protein localises to the periplasm. In terms of biological role, beta chain of the formate dehydrogenase (FDH) catalyzes the reversible two-electron oxidation of formate to carbon dioxide. FDH loses activity in the presence of air, but this activity can be restored. This chain is an electron transfer unit. The polypeptide is Formate dehydrogenase subunit beta (Megalodesulfovibrio gigas (strain ATCC 19364 / DSM 1382 / NCIMB 9332 / VKM B-1759) (Desulfovibrio gigas)).